The sequence spans 89 residues: Large ribosomal subunit protein bL31B (89 aa).

Positions 70–89 are disordered; sequence RVQRFESRRRRRQQQSGEQG.

Belongs to the bacterial ribosomal protein bL31 family. Type B subfamily. Part of the 50S ribosomal subunit.

This is Large ribosomal subunit protein bL31B from Rubrobacter xylanophilus (strain DSM 9941 / JCM 11954 / NBRC 16129 / PRD-1).